The chain runs to 484 residues: MSLHDAYHWPSRTPSRKGSNIKLNKTLQDHLDELEEQFTIPTELLHRVTDRFVSELYKGLTTNPGDVPMVPTWIIGTPDGNEHGSYLALDLGGTNLRVCAVEVQGNGKFDITQSKYRLPQELKVGTREALFDYIADCIKKFVEEVHPGKSQNLEIGFTFSYPCVQRSINDASLVAWTKGFDIDGVEGESVGPLLSAALKRVGCNNVRLNAILSDTTGTLVASNYASPGTEIGVIFGTGCNACYIEKFSEIPKLHKYDFPEDMNMIINCEWCDFDNQHVVLPRTKYDVAIDEESPRPGLQTYEKMIAGCYLGDILRRILLDLYEQGALFNGQDVTKIRDPLAMDTSVLSAIEVDPFENLDETQTLFEETYGLKTTEEERQFIRRACELIGTRSARLSACGVCALVRKMNKPSMIVGTDGSVYNLYPRFKDRLAQAFKDILGEEIGSKVVTIPAEDGSGVGAALVSALEAKGKALTSDILAEHLKN.

The Hexokinase domain maps to 25–465; the sequence is KTLQDHLDEL…SGVGAALVSA (441 aa). Residues 79–212 are hexokinase small subdomain; sequence DGNEHGSYLA…CNNVRLNAIL (134 aa). Position 90 to 95 (90 to 95) interacts with ATP; that stretch reads DLGGTN. Substrate is bound by residues 160–161, 177–178, and 213–214; these read SY, TK, and SD. The hexokinase large subdomain stretch occupies residues 213–454; sequence SDTTGTLVAS…SKVVTIPAED (242 aa). Thr237 contacts ATP. Residues Asn240, Glu269, and Glu302 each coordinate substrate. ATP contacts are provided by residues 307 to 308, 344 to 348, and 419 to 423; these read GC, TSVLS, and SVYNL.

It belongs to the hexokinase family. In terms of assembly, monomer.

It catalyses the reaction a D-hexose + ATP = a D-hexose 6-phosphate + ADP + H(+). The enzyme catalyses D-mannose + ATP = D-mannose 6-phosphate + ADP + H(+). It carries out the reaction D-fructose + ATP = D-fructose 6-phosphate + ADP + H(+). The catalysed reaction is D-glucose + ATP = D-glucose 6-phosphate + ADP + H(+). It participates in carbohydrate metabolism; hexose metabolism. The protein operates within carbohydrate degradation; glycolysis; D-glyceraldehyde 3-phosphate and glycerone phosphate from D-glucose: step 1/4. Catalyzes the phosphorylation of hexose (six-carbon sugars) to hexose 6-phosphate. Phosphorylates D-fructose, D-mannose and, to a lower extent, D-glucose. Compared to hxk2, has low affinity for D-glucose. The polypeptide is Hexokinase-1 (Schizosaccharomyces pombe (strain 972 / ATCC 24843) (Fission yeast)).